The sequence spans 127 residues: Small ribosomal subunit protein eS8 (127 aa).

Belongs to the eukaryotic ribosomal protein eS8 family. In terms of assembly, part of the 30S ribosomal subunit.

The chain is Small ribosomal subunit protein eS8 (rps8e) from Pyrococcus abyssi (strain GE5 / Orsay).